An 894-amino-acid polypeptide reads, in one-letter code: DNA mismatch repair protein MutS (894 aa).

G632–S639 provides a ligand contact to ATP.

The protein belongs to the DNA mismatch repair MutS family.

Functionally, this protein is involved in the repair of mismatches in DNA. It is possible that it carries out the mismatch recognition step. This protein has a weak ATPase activity. The chain is DNA mismatch repair protein MutS from Paraburkholderia phytofirmans (strain DSM 17436 / LMG 22146 / PsJN) (Burkholderia phytofirmans).